Consider the following 172-residue polypeptide: Small ribosomal subunit protein uS5 (172 aa).

The S5 DRBM domain occupies 17-80 (LREKMIAVNR…DEARRKMVKV (64 aa)).

The protein belongs to the universal ribosomal protein uS5 family. Part of the 30S ribosomal subunit. Contacts proteins S4 and S8.

In terms of biological role, with S4 and S12 plays an important role in translational accuracy. Functionally, located at the back of the 30S subunit body where it stabilizes the conformation of the head with respect to the body. In Ralstonia nicotianae (strain ATCC BAA-1114 / GMI1000) (Ralstonia solanacearum), this protein is Small ribosomal subunit protein uS5.